The following is a 421-amino-acid chain: Serine--tRNA ligase (421 aa).

229–231 (TAE) serves as a coordination point for L-serine. 260 to 262 (RAE) provides a ligand contact to ATP. E283 is a binding site for L-serine. An ATP-binding site is contributed by 347–350 (EISS). S383 is an L-serine binding site.

Belongs to the class-II aminoacyl-tRNA synthetase family. Type-1 seryl-tRNA synthetase subfamily. As to quaternary structure, homodimer. The tRNA molecule binds across the dimer.

Its subcellular location is the cytoplasm. The catalysed reaction is tRNA(Ser) + L-serine + ATP = L-seryl-tRNA(Ser) + AMP + diphosphate + H(+). It catalyses the reaction tRNA(Sec) + L-serine + ATP = L-seryl-tRNA(Sec) + AMP + diphosphate + H(+). The protein operates within aminoacyl-tRNA biosynthesis; selenocysteinyl-tRNA(Sec) biosynthesis; L-seryl-tRNA(Sec) from L-serine and tRNA(Sec): step 1/1. In terms of biological role, catalyzes the attachment of serine to tRNA(Ser). Is also able to aminoacylate tRNA(Sec) with serine, to form the misacylated tRNA L-seryl-tRNA(Sec), which will be further converted into selenocysteinyl-tRNA(Sec). The sequence is that of Serine--tRNA ligase from Desulfitobacterium hafniense (strain Y51).